The sequence spans 409 residues: Glucose-1-phosphate adenylyltransferase (409 aa).

Alpha-D-glucose 1-phosphate contacts are provided by residues glycine 168, 183–184 (EK), and serine 201.

It belongs to the bacterial/plant glucose-1-phosphate adenylyltransferase family. As to quaternary structure, homotetramer.

The enzyme catalyses alpha-D-glucose 1-phosphate + ATP + H(+) = ADP-alpha-D-glucose + diphosphate. Its pathway is glycan biosynthesis; glycogen biosynthesis. Involved in the biosynthesis of ADP-glucose, a building block required for the elongation reactions to produce glycogen. Catalyzes the reaction between ATP and alpha-D-glucose 1-phosphate (G1P) to produce pyrophosphate and ADP-Glc. This chain is Glucose-1-phosphate adenylyltransferase, found in Corynebacterium efficiens (strain DSM 44549 / YS-314 / AJ 12310 / JCM 11189 / NBRC 100395).